We begin with the raw amino-acid sequence, 176 residues long: Cytochrome b (176 aa).

3 consecutive transmembrane segments (helical) span residues 33-53, 77-98, and 113-133; these read FGSL…FLAM, WLLR…YLHI, and WNVG…GYVL. Residues His-83 and His-97 each contribute to the heme b site.

This sequence belongs to the cytochrome b family. In terms of assembly, the cytochrome bc1 complex contains 11 subunits: 3 respiratory subunits (MT-CYB, CYC1 and UQCRFS1), 2 core proteins (UQCRC1 and UQCRC2) and 6 low-molecular weight proteins (UQCRH/QCR6, UQCRB/QCR7, UQCRQ/QCR8, UQCR10/QCR9, UQCR11/QCR10 and a cleavage product of UQCRFS1). This cytochrome bc1 complex then forms a dimer. Requires heme b as cofactor.

It localises to the mitochondrion inner membrane. Its function is as follows. Component of the ubiquinol-cytochrome c reductase complex (complex III or cytochrome b-c1 complex) that is part of the mitochondrial respiratory chain. The b-c1 complex mediates electron transfer from ubiquinol to cytochrome c. Contributes to the generation of a proton gradient across the mitochondrial membrane that is then used for ATP synthesis. The protein is Cytochrome b (MT-CYB) of Promops centralis (Big crested mastiff bat).